A 503-amino-acid chain; its full sequence is Maturase K (503 aa).

The protein belongs to the intron maturase 2 family. MatK subfamily.

The protein localises to the plastid. It localises to the chloroplast. Its function is as follows. Usually encoded in the trnK tRNA gene intron. Probably assists in splicing its own and other chloroplast group II introns. The sequence is that of Maturase K from Aethionema cordifolium (Lebanon stonecress).